The chain runs to 241 residues: Glucosamine-6-phosphate deaminase (241 aa).

The Proton acceptor; for enolization step role is filled by Asp-67. Asn-136 (for ring-opening step) is an active-site residue. His-138 acts as the Proton acceptor; for ring-opening step in catalysis. Glu-143 serves as the catalytic For ring-opening step.

It belongs to the glucosamine/galactosamine-6-phosphate isomerase family. NagB subfamily.

It catalyses the reaction alpha-D-glucosamine 6-phosphate + H2O = beta-D-fructose 6-phosphate + NH4(+). Its pathway is amino-sugar metabolism; N-acetylneuraminate degradation; D-fructose 6-phosphate from N-acetylneuraminate: step 5/5. In terms of biological role, catalyzes the reversible isomerization-deamination of glucosamine 6-phosphate (GlcN6P) to form fructose 6-phosphate (Fru6P) and ammonium ion. The polypeptide is Glucosamine-6-phosphate deaminase (Clostridium acetobutylicum (strain ATCC 824 / DSM 792 / JCM 1419 / IAM 19013 / LMG 5710 / NBRC 13948 / NRRL B-527 / VKM B-1787 / 2291 / W)).